The following is a 524-amino-acid chain: Cytochrome P450 monooxygenase patH (524 aa).

Topologically, residues 1–4 (MEPF) are cytoplasmic. Residues 5 to 22 (LLLLLVLLPAIVLVRYAF) form a helical membrane-spanning segment. At 23–524 (TYGHRTSTMP…ADVFSRFTEG (502 aa)) the chain is on the lumenal side. N-linked (GlcNAc...) asparagine glycosylation occurs at Asn-266. Residue Cys-442 participates in heme binding.

This sequence belongs to the cytochrome P450 family. Heme serves as cofactor.

Its subcellular location is the endoplasmic reticulum membrane. It carries out the reaction 3-methylphenol + reduced [NADPH--hemoprotein reductase] + O2 = 3-hydroxybenzyl alcohol + oxidized [NADPH--hemoprotein reductase] + H2O + H(+). It participates in mycotoxin biosynthesis; patulin biosynthesis. Its function is as follows. Cytochrome P450 monooxygenase; part of the gene cluster that mediates the biosynthesis of patulin, an acetate-derived tetraketide mycotoxin produced by several fungal species that shows antimicrobial properties against several bacteria. PatH catalyzes the conversion of m-cresol into m-hydroxybenzyl alcohol. The pathway begins with the synthesis of 6-methylsalicylic acid by the polyketide synthase (PKS) patK via condensation of acetate and malonate units. The 6-methylsalicylic acid decarboxylase patG then catalyzes the decarboxylation of 6-methylsalicylic acid to yield m-cresol (also known as 3-methylphenol). These first reactions occur in the cytosol. The intermediate m-cresol is then transported into the endoplasmic reticulum where the cytochrome P450 monooxygenase patH converts it to m-hydroxybenzyl alcohol, which is further converted to gentisyl alcohol by the cytochrome P450 monooxygenase patI. The oxidoreductases patJ and patO further convert gentisyl alcohol to isoepoxydon in the vacuole. PatN catalyzes then the transformation of isoepoxydon into phyllostine. The cluster protein patF is responsible for the conversion from phyllostine to neopatulin whereas the alcohol dehydrogenase patD converts neopatulin to E-ascladiol. The steps between isoepoxydon and E-ascladiol occur in the cytosol, and E-ascladiol is probably secreted to the extracellular space by one of the cluster-specific transporters patC or patM. Finally, the secreted patulin synthase patE catalyzes the conversion of E-ascladiol to patulin. This Penicillium expansum (Blue mold rot fungus) protein is Cytochrome P450 monooxygenase patH.